Here is a 336-residue protein sequence, read N- to C-terminus: Porphobilinogen deaminase (336 aa).

Cys-251 is subject to S-(dipyrrolylmethanemethyl)cysteine. 2 positions are modified to phosphoserine: Ser-327 and Ser-329.

The protein belongs to the HMBS family. Dipyrromethane serves as cofactor.

The catalysed reaction is 4 porphobilinogen + H2O = hydroxymethylbilane + 4 NH4(+). Its pathway is porphyrin-containing compound metabolism; protoporphyrin-IX biosynthesis; coproporphyrinogen-III from 5-aminolevulinate: step 2/4. In terms of biological role, tetrapolymerization of the monopyrrole PBG into the hydroxymethylbilane pre-uroporphyrinogen in several discrete steps. The polypeptide is Porphobilinogen deaminase (hem3) (Schizosaccharomyces pombe (strain 972 / ATCC 24843) (Fission yeast)).